The primary structure comprises 367 residues: Choline-phosphate cytidylyltransferase A (367 aa).

The residue at position 1 (methionine 1) is an N-acetylmethionine. Residues 1–31 are disordered; the sequence is MDAQSSAKVNSRKRRKEVPGPNGATEEDGIP. Lysine 8 bears the N6-acetyllysine mark. Residues isoleucine 84, phenylalanine 85, histidine 92, and lysine 122 each contribute to the CTP site. Phosphocholine-binding residues include lysine 122 and tryptophan 151. CTP-binding residues include histidine 168, aspartate 169, tyrosine 173, glutamine 195, arginine 196, threonine 197, and isoleucine 200. Amphipathic regions lie at residues 228–287 and 298–315; these read KELN…EFIG and ALKH…QAIS. Phosphoserine is present on serine 233. The autoinhibitory (AI) stretch occupies residues 272-293; sequence IDLIQKWEEKSREFIGSFLEMF. The interval 313-367 is disordered; it reads AISPKQSPSSSPTHERSPSPSFRWPFSGKTSPSSSPASLSRCKAVTCDISEDEED. Position 315 is a phosphoserine; by PKC (serine 315). A compositionally biased stretch (polar residues) spans 315–324; that stretch reads SPKQSPSSSP. 4 positions are modified to phosphoserine: serine 319, serine 321, serine 322, and serine 323. Repeat 1 spans residues 319 to 324; sequence SPSSSP. Residues 319-348 form a 3 X repeats region; it reads SPSSSPTHERSPSPSFRWPFSGKTSPSSSP. Phosphothreonine is present on threonine 325. A phosphoserine mark is found at serine 329 and serine 331. A 2; approximate repeat occupies 329–333; the sequence is SPSPS. Low complexity predominate over residues 330 to 352; the sequence is PSPSFRWPFSGKTSPSSSPASLS. Serine 333 is modified (phosphoserine; by PKC). Position 342 is a phosphothreonine (threonine 342). Serine 343, serine 345, serine 346, serine 347, serine 350, and serine 352 each carry phosphoserine. Copy 3 of the repeat occupies 343–348; it reads SPSSSP. Position 358 is a phosphothreonine (threonine 358). Phosphoserine; by CK2 is present on serine 362.

It belongs to the cytidylyltransferase family. Homodimer. In terms of processing, the serine residues of the C-terminus are phosphorylated. The inactive soluble form is stabilized by phosphorylation, the active membrane bound form is promoted by anionic lipids or diacylglycerol, and is stabilized by dephosphorylation. The N-terminus is blocked. Post-translationally, monoubiquitinated by the SCF(FBXL2) complex, leading to proteasomal degradation.

The protein resides in the cytoplasm. It is found in the cytosol. It localises to the membrane. The protein localises to the endoplasmic reticulum membrane. Its subcellular location is the nucleus. It catalyses the reaction phosphocholine + CTP + H(+) = CDP-choline + diphosphate. It functions in the pathway phospholipid metabolism; phosphatidylcholine biosynthesis; phosphatidylcholine from phosphocholine: step 1/2. Its activity is regulated as follows. Interconverts between an inactive cytosolic form and an active membrane-bound form. Activation involves disruption of an inhibitory interaction between helices at the base of the active site and the autoinhibitory (AI) region. Activated by N-methylethanolamine. Activated by oleic acid-containing phosphatidylcholine vesicles. In terms of biological role, catalyzes the key rate-limiting step in the CDP-choline pathway for phosphatidylcholine biosynthesis. This is Choline-phosphate cytidylyltransferase A (Pcyt1a) from Rattus norvegicus (Rat).